The sequence spans 130 residues: Glycoprotein hormone beta-5 (130 aa).

The signal sequence occupies residues 1–24 (MKLVYLVLGAVALLLLGGPDSVLS). Disulfide bonds link Cys-36-Cys-84, Cys-50-Cys-99, Cys-60-Cys-115, Cys-64-Cys-117, and Cys-120-Cys-127. N-linked (GlcNAc...) asparagine glycosylation is present at Asn-87.

This sequence belongs to the glycoprotein hormones subunit beta family. Heterodimer with GPHA2; this heterodimer interacts with thyroid-stimulating hormone receptor (TSHR), and hence stimulates cAMP production. Post-translationally, N-glycosylated. As to expression, expressed in the anterior lobe of pituitary.

The protein localises to the secreted. In terms of biological role, functions as a heterodimeric glycoprotein hormone with GPHA2 able to bind and activate the thyroid-stimulating hormone receptor (TSHR), leading to increased cAMP production. Plays a central role in controlling thyroid cell metabolism. This chain is Glycoprotein hormone beta-5 (Gphb5), found in Mus musculus (Mouse).